A 138-amino-acid chain; its full sequence is ATP synthase epsilon chain (138 aa).

The protein belongs to the ATPase epsilon chain family. As to quaternary structure, F-type ATPases have 2 components, CF(1) - the catalytic core - and CF(0) - the membrane proton channel. CF(1) has five subunits: alpha(3), beta(3), gamma(1), delta(1), epsilon(1). CF(0) has three main subunits: a, b and c.

It is found in the cell inner membrane. Functionally, produces ATP from ADP in the presence of a proton gradient across the membrane. The polypeptide is ATP synthase epsilon chain (Geotalea uraniireducens (strain Rf4) (Geobacter uraniireducens)).